A 280-amino-acid polypeptide reads, in one-letter code: Protein phosphatase 1 regulatory subunit 3B-A (280 aa).

A PP1-binding motif motif is present at residues 58-61; sequence RVSF. Residues 121–229 enclose the CBM21 domain; it reads RNRLQADSVC…SNKSLNYKIA (109 aa).

In terms of assembly, interacts with glycogen, PPP1CC catalytic subunit of PP1 and PYGL. Associates with glycogen particles. Forms complexes with debranching enzyme, glycogen phosphorylase, glycogen synthase and phosphorylase kinase which is necessary for its regulation of PP1 activity.

Acts as a glycogen-targeting subunit for phosphatase PP1. Facilitates interaction of the PP1 with enzymes of the glycogen metabolism and regulates its activity. Suppresses the rate at which PP1 dephosphorylates (inactivates) glycogen phosphorylase and enhances the rate at which it activates glycogen synthase and therefore limits glycogen breakdown. The polypeptide is Protein phosphatase 1 regulatory subunit 3B-A (ppp1r3b-a) (Xenopus laevis (African clawed frog)).